We begin with the raw amino-acid sequence, 410 residues long: Heat stress transcription factor A-9 (410 aa).

Positions 1-44 are disordered; that stretch reads MGSKKRSPQHPAAAAPPPAVGGGGGGEVSGDGGASTANGPVVPK. The span at 20-33 shows a compositional bias: gly residues; the sequence is VGGGGGGEVSGDGG. The stretch at 171–246 forms a coiled coil; the sequence is GLEKEVETLK…QLVQQQQQQR (76 aa). A hydrophobic repeat HR-A/B region spans residues 179 to 229; it reads LKRDKALLMQQLVDLRHYQQTSNLEVQNLIERLQVMEQNQQQMMALLAIVV. The Nuclear localization signal motif lies at 256-260; sequence SKKRR. The short motif at 279–290 is the Nuclear export signal element; that stretch reads AHIVEYLPPVPE.

Belongs to the HSF family. Class A subfamily. As to quaternary structure, homotrimer. In terms of processing, exhibits temperature-dependent phosphorylation.

It localises to the cytoplasm. Its subcellular location is the nucleus. Functionally, transcriptional regulator that specifically binds DNA of heat shock promoter elements (HSE). This chain is Heat stress transcription factor A-9 (HSFA9), found in Oryza sativa subsp. japonica (Rice).